Here is a 357-residue protein sequence, read N- to C-terminus: Sulfate/thiosulfate import ATP-binding protein CysA (357 aa).

Residues 3–237 (IQIQGVSKQY…PASPFVYDFL (235 aa)) enclose the ABC transporter domain. 35 to 42 (GPSGSGKT) provides a ligand contact to ATP.

It belongs to the ABC transporter superfamily. Sulfate/tungstate importer (TC 3.A.1.6) family. In terms of assembly, the complex is composed of two ATP-binding proteins (CysA), two transmembrane proteins (CysT and CysW) and a solute-binding protein (CysP).

The protein resides in the cell membrane. The catalysed reaction is sulfate(out) + ATP + H2O = sulfate(in) + ADP + phosphate + H(+). The enzyme catalyses thiosulfate(out) + ATP + H2O = thiosulfate(in) + ADP + phosphate + H(+). Functionally, part of the ABC transporter complex CysAWTP involved in sulfate/thiosulfate import. Responsible for energy coupling to the transport system. This chain is Sulfate/thiosulfate import ATP-binding protein CysA, found in Bacillus cereus (strain ATCC 14579 / DSM 31 / CCUG 7414 / JCM 2152 / NBRC 15305 / NCIMB 9373 / NCTC 2599 / NRRL B-3711).